The sequence spans 518 residues: Arginyl-tRNA--protein transferase 1 (518 aa).

S169 is modified (phosphoserine). Residues 175–203 (EKLGSGEPSHSVKVHTVPKPGKGADLSKP) form a disordered region.

This sequence belongs to the R-transferase family. In terms of assembly, monomer. Interacts with LIAT1; LIAT1 is not a substrate of ATE1, the interaction takes place in the cytoplasm and seems to increase ATE1 arginyltransferase activity.

The protein localises to the nucleus. It localises to the cytoplasm. It carries out the reaction an N-terminal L-alpha-aminoacyl-[protein] + L-arginyl-tRNA(Arg) = an N-terminal L-arginyl-L-aminoacyl-[protein] + tRNA(Arg) + H(+). Functionally, involved in the post-translational conjugation of arginine to the N-terminal aspartate or glutamate of a protein. This arginylation is required for degradation of the protein via the ubiquitin pathway. Does not arginylate cysteine residues. The polypeptide is Arginyl-tRNA--protein transferase 1 (Homo sapiens (Human)).